The following is a 207-amino-acid chain: Thiamine-phosphate synthase (207 aa).

Residues 36 to 40 (QLRIK) and aspartate 68 each bind 4-amino-2-methyl-5-(diphosphooxymethyl)pyrimidine. The Mg(2+) site is built by aspartate 69 and aspartate 88. Serine 106 contacts 4-amino-2-methyl-5-(diphosphooxymethyl)pyrimidine. 132–134 (TKT) is a 2-[(2R,5Z)-2-carboxy-4-methylthiazol-5(2H)-ylidene]ethyl phosphate binding site. Lysine 135 is a 4-amino-2-methyl-5-(diphosphooxymethyl)pyrimidine binding site. 2-[(2R,5Z)-2-carboxy-4-methylthiazol-5(2H)-ylidene]ethyl phosphate contacts are provided by residues glycine 162 and 182-183 (VS).

It belongs to the thiamine-phosphate synthase family. The cofactor is Mg(2+).

It carries out the reaction 2-[(2R,5Z)-2-carboxy-4-methylthiazol-5(2H)-ylidene]ethyl phosphate + 4-amino-2-methyl-5-(diphosphooxymethyl)pyrimidine + 2 H(+) = thiamine phosphate + CO2 + diphosphate. It catalyses the reaction 2-(2-carboxy-4-methylthiazol-5-yl)ethyl phosphate + 4-amino-2-methyl-5-(diphosphooxymethyl)pyrimidine + 2 H(+) = thiamine phosphate + CO2 + diphosphate. The catalysed reaction is 4-methyl-5-(2-phosphooxyethyl)-thiazole + 4-amino-2-methyl-5-(diphosphooxymethyl)pyrimidine + H(+) = thiamine phosphate + diphosphate. It participates in cofactor biosynthesis; thiamine diphosphate biosynthesis; thiamine phosphate from 4-amino-2-methyl-5-diphosphomethylpyrimidine and 4-methyl-5-(2-phosphoethyl)-thiazole: step 1/1. In terms of biological role, condenses 4-methyl-5-(beta-hydroxyethyl)thiazole monophosphate (THZ-P) and 2-methyl-4-amino-5-hydroxymethyl pyrimidine pyrophosphate (HMP-PP) to form thiamine monophosphate (TMP). The polypeptide is Thiamine-phosphate synthase (Pyrococcus abyssi (strain GE5 / Orsay)).